The primary structure comprises 360 residues: Beta-1,3-N-acetylglucosaminyltransferase manic fringe (360 aa).

At 1-5 (MILRR) the chain is on the cytoplasmic side. Residues 6 to 26 (LFHVLPAFAFTLFILVLLDLQ) traverse the membrane as a helical; Signal-anchor for type II membrane protein segment. At 27–360 (LRTRSDQKPQ…ALSWNQHVMH (334 aa)) the chain is on the lumenal side. Positions 51–74 (TTAENQHRDGAHEKEKAEGQKWTE) are disordered. Basic and acidic residues predominate over residues 55–74 (NQHRDGAHEKEKAEGQKWTE). Arg-100 lines the substrate pocket. 2 disulfide bridges follow: Cys-139–Cys-150 and Cys-168–Cys-231. Asp-172 serves as a coordination point for substrate. Asp-173 provides a ligand contact to Mn(2+). Asn-214 carries N-linked (GlcNAc...) asparagine glycosylation. Residue Asp-261 is part of the active site. Residue His-285 coordinates Mn(2+). Cys-335 and Cys-344 are joined by a disulfide.

The protein belongs to the glycosyltransferase 31 family. The cofactor is Mn(2+).

The protein resides in the golgi apparatus membrane. The catalysed reaction is 3-O-(alpha-L-fucosyl)-L-threonyl-[EGF-like domain protein] + UDP-N-acetyl-alpha-D-glucosamine = 3-O-(N-acetyl-beta-D-glucosaminyl-(1-&gt;3)-alpha-L-fucosyl)-L-threonyl-[EGF-like domain protein] + UDP + H(+). It carries out the reaction 3-O-(alpha-L-fucosyl)-L-seryl-[EGF-like domain protein] + UDP-N-acetyl-alpha-D-glucosamine = 3-O-(N-acetyl-beta-D-glucosaminyl-(1-&gt;3)-alpha-L-fucosyl)-L-seryl-[EGF-like domain protein] + UDP + H(+). Its function is as follows. Glycosyltransferase that initiates the elongation of O-linked fucose residues attached to EGF-like repeats in the extracellular domain of Notch molecules. This chain is Beta-1,3-N-acetylglucosaminyltransferase manic fringe, found in Danio rerio (Zebrafish).